Reading from the N-terminus, the 444-residue chain is uncharacterized protein (444 aa).

The HTH gntR-type domain maps to 1-69 (MEKYMSLLTR…PKSGYYIVKK (69 aa)). A DNA-binding region (H-T-H motif) is located at residues 29–48 (IRQLSARYQVSKSTVIRALQ). Lys-286 is modified (N6-(pyridoxal phosphate)lysine).

In the C-terminal section; belongs to the class-I pyridoxal-phosphate-dependent aminotransferase family. Pyridoxal 5'-phosphate is required as a cofactor.

This is an uncharacterized protein from Bacillus subtilis (strain 168).